The chain runs to 378 residues: UPF0725 protein At1g23970 (378 aa).

The protein belongs to the UPF0725 (EMB2204) family.

The polypeptide is UPF0725 protein At1g23970 (Arabidopsis thaliana (Mouse-ear cress)).